Here is a 272-residue protein sequence, read N- to C-terminus: uncharacterized protein (272 aa).

4 helical membrane-spanning segments follow: residues 9-29 (PVGF…GSGV), 38-58 (LTSF…SFPP), 154-174 (AGEF…VLML), and 188-208 (AIAL…FNPI). Residues 209-272 (AAKLEEKTES…KTKKGSVHEA (64 aa)) are Cytoplasmic-facing.

This sequence belongs to the MotA family.

Its subcellular location is the cell membrane. In terms of biological role, may be involved in some transport function. This is an uncharacterized protein from Bacillus subtilis (strain 168).